The following is a 184-amino-acid chain: Helix-loop-helix protein ngn-1 (184 aa).

Residues 1 to 55 (MYHHSPFYPHHLQTGEQDLDMERENDMDQNSKNSTQKPVKREKRRYRCRKRSPAT) form a disordered region. The segment covering 28–37 (DQNSKNSTQK) has biased composition (polar residues). Over residues 38 to 52 (PVKREKRRYRCRKRS) the composition is skewed to basic residues. The segment at 62–75 (VRRDKANARERRRM) is basic motif. One can recognise a bHLH domain in the interval 62–114 (VRRDKANARERRRMNSLNDALEHLRGILPALPDEPKMTKIETLRKAQEYIASL). Residues 76–114 (NSLNDALEHLRGILPALPDEPKMTKIETLRKAQEYIASL) are helix-loop-helix motif. Residues 164–184 (SNPPSQMYYHHHHQSPSFPHH) form a disordered region. Over residues 172-184 (YHHHHQSPSFPHH) the composition is skewed to basic residues.

As to quaternary structure, interacts with hlh-2; the interaction is direct.

The protein localises to the nucleus. In terms of biological role, acts as a transcriptional regulator. Regulates expression of various genes, including homeobox protein unc-42 and helix-loop-helix protein hlh-34. Required for embryonic viability, neuromuscular development, organization of the nerve ring and neuronal cell body location. Regulates AIY neuron axon morphology and cell fate. Plays a role in cell autonomously establishing a neuronal left-right asymmetry. Involved in regulating glial specification. This is Helix-loop-helix protein ngn-1 from Caenorhabditis elegans.